The primary structure comprises 209 residues: Pyrrolidone-carboxylate peptidase (209 aa).

Residues Glu79, Cys142, and His164 contribute to the active site.

Belongs to the peptidase C15 family. Homotetramer.

It localises to the cytoplasm. It catalyses the reaction Release of an N-terminal pyroglutamyl group from a polypeptide, the second amino acid generally not being Pro.. Its function is as follows. Removes 5-oxoproline from various penultimate amino acid residues except L-proline. The protein is Pyrrolidone-carboxylate peptidase of Saccharolobus islandicus (strain Y.N.15.51 / Yellowstone #2) (Sulfolobus islandicus).